A 514-amino-acid chain; its full sequence is Maltose/maltodextrin transport system permease protein MalF (514 aa).

Residues 1-16 (MDVIKKKHWWQSDALK) lie on the Cytoplasmic side of the membrane. The chain crosses the membrane as a helical span at residues 17 to 36 (WSVLGLLGLLVGYLVVLMYA). The Periplasmic segment spans residues 37-39 (QGE). A helical membrane pass occupies residues 40–57 (YLFAITTLILSSAGLYIF). Residues 58–69 (ANRKAYAWRYVY) lie on the Cytoplasmic side of the membrane. A helical transmembrane segment spans residues 70 to 92 (PGMAGMGLFVLFPLVCTIAIAFT). The Periplasmic segment spans residues 93-283 (NYSSTNQLTF…QKPFLAIFVW (191 aa)). One can recognise an ABC transmembrane type-1 domain in the interval 281-505 (FVWTVVFSLI…LLVGALAIVN (225 aa)). A helical membrane pass occupies residues 284-306 (TVVFSLITVFLTVAVGMVLACLV). The Cytoplasmic segment spans residues 307 to 318 (QWEALRGKAVYR). Residues 319–341 (VLLILPYAVPSFISILIFKGLFN) form a helical membrane-spanning segment. Over 342–369 (QSFGEINMMLSALFGVKPAWFSDPTTAR) the chain is Periplasmic. A helical membrane pass occupies residues 370–392 (TMLIIVNTWLGYPYMMILCMGLL). Topologically, residues 393–412 (KAIPDDLYEASAMDGAGPFQ) are cytoplasmic. Residues 413-435 (NFFKITLPLLIKPLTPLMIASFA) traverse the membrane as a helical segment. The Periplasmic portion of the chain corresponds to 436 to 483 (FNFNNFVLIQLLTNGGPDRLGTTTPAGYTDLLVNYTYRIAFEGGGGQD). Residues 484–506 (FGLAAAIATLIFLLVGALAIVNL) traverse the membrane as a helical segment. At 507–514 (KATRMKFD) the chain is on the cytoplasmic side.

The protein belongs to the binding-protein-dependent transport system permease family. MalFG subfamily. As to quaternary structure, the complex is composed of two ATP-binding proteins (MalK), two transmembrane proteins (MalG and MalF) and a solute-binding protein (MalE).

It localises to the cell inner membrane. In terms of biological role, part of the ABC transporter complex MalEFGK involved in maltose/maltodextrin import. Probably responsible for the translocation of the substrate across the membrane. This Escherichia coli O157:H7 protein is Maltose/maltodextrin transport system permease protein MalF (malF).